The chain runs to 458 residues: tRNA modification GTPase MnmE (458 aa).

Arginine 26, glutamate 88, and arginine 127 together coordinate (6S)-5-formyl-5,6,7,8-tetrahydrofolate. A TrmE-type G domain is found at 224–378; the sequence is GLSTAIIGRP…IEDRINQLFF (155 aa). Asparagine 234 is a K(+) binding site. GTP contacts are provided by residues 234-239, 253-259, and 278-281; these read NVGKSS, TDIAGTT, and DTAG. Serine 238 serves as a coordination point for Mg(2+). Positions 253, 255, and 258 each coordinate K(+). Threonine 259 is a Mg(2+) binding site. Lysine 458 contacts (6S)-5-formyl-5,6,7,8-tetrahydrofolate.

The protein belongs to the TRAFAC class TrmE-Era-EngA-EngB-Septin-like GTPase superfamily. TrmE GTPase family. In terms of assembly, homodimer. Heterotetramer of two MnmE and two MnmG subunits. K(+) serves as cofactor.

It is found in the cytoplasm. In terms of biological role, exhibits a very high intrinsic GTPase hydrolysis rate. Involved in the addition of a carboxymethylaminomethyl (cmnm) group at the wobble position (U34) of certain tRNAs, forming tRNA-cmnm(5)s(2)U34. This Streptococcus pyogenes serotype M18 (strain MGAS8232) protein is tRNA modification GTPase MnmE.